Here is a 116-residue protein sequence, read N- to C-terminus: Ly-6/neurotoxin-like protein 1 (116 aa).

A signal peptide spans 1-20 (MTPLLTLILVVLMGLPLAQA). Positions 21–105 (LDCHVCAYNG…LATPATLALA (85 aa)) constitute a UPAR/Ly6 domain. Intrachain disulfides connect C23/C46, C26/C33, C39/C64, C68/C85, and C86/C91. N92 carries GPI-anchor amidated asparagine lipidation. Residues 93–116 (GAGLATPATLALAPILLATLWGLL) constitute a propeptide, removed in mature form.

As to quaternary structure, interacts with nAChRs containing alpha-4:beta-2 (CHRNA4:CHRNB2) and alpha-7 (CHRNA7) subunits. Interacts with CHRNA4 probably in the endoplasmic reticulum prior to nAChR pentameric assembly. Interacts with KCNA2/Potassium voltage-gated channel subfamily A member 2.

The protein resides in the cell membrane. Its subcellular location is the cell projection. It localises to the dendrite. It is found in the endoplasmic reticulum. Its function is as follows. Acts in different tissues through interaction to nicotinic acetylcholine receptors (nAChRs). The proposed role as modulator of nAChR activity seems to be dependent on the nAChR subtype and stoichiometry, and to involve an effect on nAChR trafficking and its cell surface expression, and on single channel properties of the nAChR inserted in the plasma membrane. Modulates functional properties of nicotinic acetylcholine receptors (nAChRs) to prevent excessive excitation, and hence neurodegeneration. Enhances desensitization by increasing both the rate and extent of desensitization of alpha-4:beta-2-containing nAChRs and slowing recovery from desensitization. Promotes large amplitude ACh-evoked currents through alpha-4:beta-2 nAChRs. Is involved in regulation of the nAChR pentameric assembly in the endoplasmic reticulum. Shifts stoichiometry from high sensitivity alpha-4(2):beta-2(3) to low sensitivity alpha-4(3):beta-2(2) nAChR. In vitro modulates alpha-3:beta-4-containing nAChRs. Reduces cell surface expression of (alpha-3:beta-4)(2):beta-4 and (alpha-3:beta-4)(2):alpha-5 nAChRs suggesting an interaction with nAChR alpha-3(-):(+)beta-4 subunit interfaces and an allosteric mode. Corresponding single channel effects characterized by decreased unitary conductance, altered burst proportions and enhanced desensitization/inactivation seem to depend on nAChR alpha:alpha subunit interfaces and are greater in (alpha-3:beta-2)(2):alpha-3 when compared to (alpha-3:beta-2)(2):alpha-5 nAChRs. Prevents plasticity in the primary visual cortex late in life. The chain is Ly-6/neurotoxin-like protein 1 from Pan troglodytes (Chimpanzee).